A 1403-amino-acid polypeptide reads, in one-letter code: DNA-directed RNA polymerase subunit beta' (1403 aa).

4 residues coordinate Zn(2+): cysteine 70, cysteine 72, cysteine 85, and cysteine 88. Residues aspartate 461, aspartate 463, and aspartate 465 each contribute to the Mg(2+) site. Residues 687-708 form a disordered region; it reads QQISQEETTGDRDGKRETRKQP. The span at 695–706 shows a compositional bias: basic and acidic residues; it reads TGDRDGKRETRK. Zn(2+)-binding residues include cysteine 805, cysteine 879, cysteine 886, and cysteine 889. The segment at 1381-1403 is disordered; it reads THGDTGPLGEPSRPVGTQTTGAA.

This sequence belongs to the RNA polymerase beta' chain family. In terms of assembly, the RNAP catalytic core consists of 2 alpha, 1 beta, 1 beta' and 1 omega subunit. When a sigma factor is associated with the core the holoenzyme is formed, which can initiate transcription. Mg(2+) is required as a cofactor. Requires Zn(2+) as cofactor.

The enzyme catalyses RNA(n) + a ribonucleoside 5'-triphosphate = RNA(n+1) + diphosphate. DNA-dependent RNA polymerase catalyzes the transcription of DNA into RNA using the four ribonucleoside triphosphates as substrates. The protein is DNA-directed RNA polymerase subunit beta' of Myxococcus xanthus (strain DK1622).